The primary structure comprises 69 residues: Putative membrane protein insertion efficiency factor (69 aa).

Belongs to the UPF0161 family.

Its subcellular location is the cell inner membrane. In terms of biological role, could be involved in insertion of integral membrane proteins into the membrane. The protein is Putative membrane protein insertion efficiency factor of Magnetococcus marinus (strain ATCC BAA-1437 / JCM 17883 / MC-1).